We begin with the raw amino-acid sequence, 122 residues long: Large ribosomal subunit protein uL14 (122 aa).

Belongs to the universal ribosomal protein uL14 family. Part of the 50S ribosomal subunit. Forms a cluster with proteins L3 and L19. In the 70S ribosome, L14 and L19 interact and together make contacts with the 16S rRNA in bridges B5 and B8.

Functionally, binds to 23S rRNA. Forms part of two intersubunit bridges in the 70S ribosome. The polypeptide is Large ribosomal subunit protein uL14 (Francisella tularensis subsp. holarctica (strain LVS)).